Reading from the N-terminus, the 154-residue chain is MKDVVGSPGTWSGMSLRVSQCVFAGASVVAMASAYGFSNYTAFCYLIASMGLQLLWSFGLACLDIYSLQTKRDLHNPVLVSLFVVGDWVTAILSFAAASASAGVTILFERDVHFCRMYPQLSCGRYELSVILAFITWSFIATSAVSMFWLLASL.

Residues 1–17 (MKDVVGSPGTWSGMSLR) lie on the Cytoplasmic side of the membrane. Residues 18–38 (VSQCVFAGASVVAMASAYGFS) form a helical membrane-spanning segment. An N-linked (GlcNAc...) asparagine glycan is attached at N39. Topologically, residues 39–42 (NYTA) are extracellular. The helical transmembrane segment at 43–63 (FCYLIASMGLQLLWSFGLACL) threads the bilayer. Residues 64 to 77 (DIYSLQTKRDLHNP) are Cytoplasmic-facing. The helical transmembrane segment at 78-98 (VLVSLFVVGDWVTAILSFAAA) threads the bilayer. Residues 99–129 (SASAGVTILFERDVHFCRMYPQLSCGRYELS) lie on the Extracellular side of the membrane. A helical membrane pass occupies residues 130–150 (VILAFITWSFIATSAVSMFWL). Residues 151–154 (LASL) are Cytoplasmic-facing.

This sequence belongs to the Casparian strip membrane proteins (CASP) family. Homodimer and heterodimers.

It localises to the cell membrane. This Oryza sativa subsp. indica (Rice) protein is CASP-like protein 5B3.